Here is a 376-residue protein sequence, read N- to C-terminus: UDP-N-acetylglucosamine--N-acetylmuramyl-(pentapeptide) pyrophosphoryl-undecaprenol N-acetylglucosamine transferase (376 aa).

UDP-N-acetyl-alpha-D-glucosamine contacts are provided by residues 12–14, N126, R163, S198, and Q296; that span reads TAG.

The protein belongs to the glycosyltransferase 28 family. MurG subfamily.

Its subcellular location is the cell membrane. The enzyme catalyses di-trans,octa-cis-undecaprenyl diphospho-N-acetyl-alpha-D-muramoyl-L-alanyl-D-glutamyl-meso-2,6-diaminopimeloyl-D-alanyl-D-alanine + UDP-N-acetyl-alpha-D-glucosamine = di-trans,octa-cis-undecaprenyl diphospho-[N-acetyl-alpha-D-glucosaminyl-(1-&gt;4)]-N-acetyl-alpha-D-muramoyl-L-alanyl-D-glutamyl-meso-2,6-diaminopimeloyl-D-alanyl-D-alanine + UDP + H(+). Its pathway is cell wall biogenesis; peptidoglycan biosynthesis. Cell wall formation. Catalyzes the transfer of a GlcNAc subunit on undecaprenyl-pyrophosphoryl-MurNAc-pentapeptide (lipid intermediate I) to form undecaprenyl-pyrophosphoryl-MurNAc-(pentapeptide)GlcNAc (lipid intermediate II). This is UDP-N-acetylglucosamine--N-acetylmuramyl-(pentapeptide) pyrophosphoryl-undecaprenol N-acetylglucosamine transferase from Frankia casuarinae (strain DSM 45818 / CECT 9043 / HFP020203 / CcI3).